We begin with the raw amino-acid sequence, 363 residues long: AA9 family lytic polysaccharide monooxygenase I (363 aa).

Residues 1-19 (MSLFKFAAFVLGTAGSVAG) form the signal peptide. 2 residues coordinate Cu(2+): H20 and H105. Intrachain disulfides connect C75–C197 and C116–C120. O2-binding residues include H183 and Q192. Y194 serves as a coordination point for Cu(2+). Positions 248–257 (GSDSNTATSG) are enriched in polar residues. Disordered regions lie at residues 248–270 (GSDSNTATSGASPPSTNFSPTTT) and 298–363 (SVSY…RTQS). The segment covering 258–270 (ASPPSTNFSPTTT) has biased composition (low complexity). The segment covering 298–307 (SVSYSQTPWP) has biased composition (polar residues). Residues 308–329 (SSTATEATSASSSAGGSNNGHT) show a composition bias toward low complexity. Basic residues predominate over residues 342–354 (TGKKRSRLNRRRM).

This sequence belongs to the polysaccharide monooxygenase AA9 family. It depends on Cu(2+) as a cofactor.

It localises to the secreted. It carries out the reaction [(1-&gt;4)-beta-D-glucosyl]n+m + reduced acceptor + O2 = 4-dehydro-beta-D-glucosyl-[(1-&gt;4)-beta-D-glucosyl]n-1 + [(1-&gt;4)-beta-D-glucosyl]m + acceptor + H2O.. Lytic polysaccharide monooxygenase (LPMO) that depolymerizes crystalline and amorphous polysaccharides via the oxidation of scissile alpha- or beta-(1-4)-glycosidic bonds, yielding C1 or C4 oxidation products. Catalysis by LPMOs requires the reduction of the active-site copper from Cu(II) to Cu(I) by a reducing agent and H(2)O(2) or O(2) as a cosubstrate. This is AA9 family lytic polysaccharide monooxygenase I from Emericella nidulans (strain FGSC A4 / ATCC 38163 / CBS 112.46 / NRRL 194 / M139) (Aspergillus nidulans).